The chain runs to 508 residues: Photosystem II CP47 reaction center protein (508 aa).

A run of 6 helical transmembrane segments spans residues 21-36, 101-115, 140-156, 203-218, 237-252, and 457-472; these read SVHI…WAGS, IVFS…IWHW, GIHL…FGAF, IAAG…FHLS, VLSS…AFVV, and SFAL…HGAR.

This sequence belongs to the PsbB/PsbC family. PsbB subfamily. PSII is composed of 1 copy each of membrane proteins PsbA, PsbB, PsbC, PsbD, PsbE, PsbF, PsbH, PsbI, PsbJ, PsbK, PsbL, PsbM, PsbT, PsbX, PsbY, PsbZ, Psb30/Ycf12, at least 3 peripheral proteins of the oxygen-evolving complex and a large number of cofactors. It forms dimeric complexes. Binds multiple chlorophylls. PSII binds additional chlorophylls, carotenoids and specific lipids. serves as cofactor.

Its subcellular location is the plastid. The protein resides in the chloroplast thylakoid membrane. Functionally, one of the components of the core complex of photosystem II (PSII). It binds chlorophyll and helps catalyze the primary light-induced photochemical processes of PSII. PSII is a light-driven water:plastoquinone oxidoreductase, using light energy to abstract electrons from H(2)O, generating O(2) and a proton gradient subsequently used for ATP formation. The protein is Photosystem II CP47 reaction center protein of Lactuca sativa (Garden lettuce).